Here is a 122-residue protein sequence, read N- to C-terminus: Large ribosomal subunit protein uL14 (122 aa).

Belongs to the universal ribosomal protein uL14 family. Part of the 50S ribosomal subunit. Forms a cluster with proteins L3 and L19. In the 70S ribosome, L14 and L19 interact and together make contacts with the 16S rRNA in bridges B5 and B8.

In terms of biological role, binds to 23S rRNA. Forms part of two intersubunit bridges in the 70S ribosome. The sequence is that of Large ribosomal subunit protein uL14 from Bacillus mycoides (strain KBAB4) (Bacillus weihenstephanensis).